We begin with the raw amino-acid sequence, 389 residues long: Chalcone synthase 4-2 (389 aa).

Cysteine 164 is a catalytic residue.

Belongs to the thiolase-like superfamily. Chalcone/stilbene synthases family.

It carries out the reaction (E)-4-coumaroyl-CoA + 3 malonyl-CoA + 3 H(+) = 2',4,4',6'-tetrahydroxychalcone + 3 CO2 + 4 CoA. Its pathway is secondary metabolite biosynthesis; flavonoid biosynthesis. Its function is as follows. The primary product of this enzyme is 4,2',4',6'-tetrahydroxychalcone (also termed naringenin-chalcone or chalcone) which can under specific conditions spontaneously isomerize into naringenin. The polypeptide is Chalcone synthase 4-2 (CHS4-2) (Medicago sativa (Alfalfa)).